We begin with the raw amino-acid sequence, 89 residues long: Large ribosomal subunit protein eL34 (89 aa).

Residues Met1–Val32 are disordered.

This sequence belongs to the eukaryotic ribosomal protein eL34 family.

The protein is Large ribosomal subunit protein eL34 of Methanococcus aeolicus (strain ATCC BAA-1280 / DSM 17508 / OCM 812 / Nankai-3).